A 354-amino-acid chain; its full sequence is MSEPRRPAAFRIEPAPSPSPEATREDVRKPRAIRVDEAVKITPAEIDIFDSLETEASAPPPAAAPKRRSRLGAVFVAALGMLVSLAAGLWADSLIRDLFSRADWLGWLGAALVAVAALALFAIVVREAIAVARLASVERMRRRSDDAYERDDARQARAVIADLSSLLASHPDTAAGRRQLEQLEGDVIDGRDLLRIAEKELLAPLDKRAQKLVLDAAKRVSVVTAVSPRALMDVGYVIFEAVRLLRRLSELYCGRPGFFGFLRLSRNVLAHLAVTGSMAMGDTIVQQIVGHGIAARLSARLGEGVVNGMMTARIGMAAISAIRPLSFRAVERPGIGDFLKALTQFAAKTDGKRT.

The interval 1-28 (MSEPRRPAAFRIEPAPSPSPEATREDVR) is disordered. 2 consecutive transmembrane segments (helical) span residues 71–91 (LGAV…GLWA) and 105–125 (LGWL…AIVV).

This sequence belongs to the UPF0283 family.

The protein localises to the cell inner membrane. The protein is UPF0283 membrane protein Meso_1416 of Chelativorans sp. (strain BNC1).